We begin with the raw amino-acid sequence, 627 residues long: Phosphomethylpyrimidine synthase (627 aa).

The segment covering 1–24 (MSATQKNNITRLEQLDRQSTQPFP) has biased composition (polar residues). Positions 1–29 (MSATQKNNITRLEQLDRQSTQPFPNSRKV) are disordered. Residues asparagine 231, methionine 260, tyrosine 289, histidine 325, 345 to 347 (SRG), 386 to 389 (DGLR), and glutamate 425 each bind substrate. Residue histidine 429 coordinates Zn(2+). Tyrosine 452 serves as a coordination point for substrate. Histidine 493 lines the Zn(2+) pocket. The [4Fe-4S] cluster site is built by cysteine 573, cysteine 576, and cysteine 581.

This sequence belongs to the ThiC family. As to quaternary structure, homodimer. The cofactor is [4Fe-4S] cluster.

The enzyme catalyses 5-amino-1-(5-phospho-beta-D-ribosyl)imidazole + S-adenosyl-L-methionine = 4-amino-2-methyl-5-(phosphooxymethyl)pyrimidine + CO + 5'-deoxyadenosine + formate + L-methionine + 3 H(+). The protein operates within cofactor biosynthesis; thiamine diphosphate biosynthesis. In terms of biological role, catalyzes the synthesis of the hydroxymethylpyrimidine phosphate (HMP-P) moiety of thiamine from aminoimidazole ribotide (AIR) in a radical S-adenosyl-L-methionine (SAM)-dependent reaction. The protein is Phosphomethylpyrimidine synthase of Pseudomonas paraeruginosa (strain DSM 24068 / PA7) (Pseudomonas aeruginosa (strain PA7)).